The chain runs to 307 residues: Chaperone protein DnaJ 2 (307 aa).

Residues 6–71 (NYYQILGVPR…TKRRELDSRL (66 aa)) enclose the J domain. The tract at residues 69-133 (SRLFGRFRRP…TRRTKVVSPA (65 aa)) is disordered. A compositionally biased stretch (polar residues) spans 88 to 99 (NGGRSPNGTSVN). Residues 100–114 (GQVRTPTGRTGTRQP) show a composition bias toward low complexity.

Belongs to the DnaJ family. In terms of assembly, homodimer. The cofactor is Zn(2+).

The protein localises to the cytoplasm. In terms of biological role, participates actively in the response to hyperosmotic and heat shock by preventing the aggregation of stress-denatured proteins and by disaggregating proteins, also in an autonomous, DnaK-independent fashion. Unfolded proteins bind initially to DnaJ; upon interaction with the DnaJ-bound protein, DnaK hydrolyzes its bound ATP, resulting in the formation of a stable complex. GrpE releases ADP from DnaK; ATP binding to DnaK triggers the release of the substrate protein, thus completing the reaction cycle. Several rounds of ATP-dependent interactions between DnaJ, DnaK and GrpE are required for fully efficient folding. Also involved, together with DnaK and GrpE, in the DNA replication of plasmids through activation of initiation proteins. The protein is Chaperone protein DnaJ 2 (dnaJ2) of Synechocystis sp. (strain ATCC 27184 / PCC 6803 / Kazusa).